The following is a 519-amino-acid chain: Circadian clock oscillator protein KaiC 1 (519 aa).

KaiC domains are found at residues 1–248 (MNLP…INIF) and 262–519 (ARIS…KTAE). 20 residues coordinate ATP: Gly50, Thr51, Gly52, Lys53, Thr54, Leu55, Ser90, Lys225, Leu226, Arg227, Thr229, His231, Thr241, Thr291, Gly292, Thr293, Gly294, Lys295, Thr296, and Leu297. Position 54 (Thr54) interacts with Mg(2+). Thr296 lines the Mg(2+) pocket. Position 319 (Glu319) interacts with Mg(2+). Trp332 is an ATP binding site. Ser432 is subject to Phosphoserine; by autocatalysis. Thr433 carries the post-translational modification Phosphothreonine; by autocatalysis. Arg452, Lys458, Met459, Arg460, Ser462, His464, and Lys466 together coordinate ATP.

This sequence belongs to the KaiC family. As to quaternary structure, homohexamer; hexamerization is dependent on ATP-binding. Core component of the KaiABC complex, at least composed of a KaiC homohexamer, a KaiB dimer and two KaiA dimers. Interacts directly with SasA. Multimerizes, probably forming homohexamers, no interaction with KaiC2 or KaiC3 is seen. Interacts with KaiA. In another study interacts with itself, KaiB1, KaiB3 and KaiC3. Interacts with SasA (hik8). Mg(2+) serves as cofactor. Post-translationally, phosphorylated on serine and threonine residues by autocatalysis. Has a 4 step phosphorylation cycle; the autokinase acts first on Thr-433, then Ser-432. When Ser-432 is modified KaiC switches to an autophosphatase mode, acting first on phospho-Thr-433 then phospho-Ser-432.

It catalyses the reaction L-seryl-[protein] + ATP = O-phospho-L-seryl-[protein] + ADP + H(+). The enzyme catalyses L-threonyl-[protein] + ATP = O-phospho-L-threonyl-[protein] + ADP + H(+). It carries out the reaction ATP + H2O = ADP + phosphate + H(+). The interaction with KaiA enhances its phosphorylation status, while the interaction with KaiB decreases it. Functionally, component of the oscillator and circadian clock in this organism, enhances fitness in a rhythmic environment. Autophosphorylates in the presence of KaiA, no activity is seen in its absence. Central component of the KaiABC oscillator complex, which constitutes the main circadian regulator in cyanobacteria. Complex composition changes during the circadian cycle to control KaiC phosphorylation. KaiA stimulates KaiC autophosphorylation, while KaiB sequesters KaiA, leading to KaiC autodephosphorylation. Clock output pathways impact the RpaA transcriptional regulator. KaiC enhances the autophosphorylation activity of SasA, which then transfers its phosphate group to RpaA to activate it. KaiB and KaiC together enhance the phospho-RpaA dephosphatase activity of CikA. In terms of biological role, has a weak, temperature-independent ATPase activity; ATPase activity defines the circadian period. The phosphorylation state of KaiC modulates its ATPase activity and effects KaiB binding. The sequence is that of Circadian clock oscillator protein KaiC 1 from Synechocystis sp. (strain ATCC 27184 / PCC 6803 / Kazusa).